We begin with the raw amino-acid sequence, 341 residues long: NADH-ubiquinone oxidoreductase chain 2 (341 aa).

A run of 9 helical transmembrane segments spans residues 8-28 (ILFI…NSWL), 60-80 (YFLT…LLML), 95-115 (MIIM…FWFP), 121-141 (LTWM…LMLI), 146-166 (IKYL…IGGL), 195-215 (SIWL…TFMF), 238-258 (FTLF…GFLP), 273-293 (FMLT…LRIC), and 321-341 (MIMT…YFMF).

This sequence belongs to the complex I subunit 2 family.

The protein resides in the mitochondrion inner membrane. The enzyme catalyses a ubiquinone + NADH + 5 H(+)(in) = a ubiquinol + NAD(+) + 4 H(+)(out). Functionally, core subunit of the mitochondrial membrane respiratory chain NADH dehydrogenase (Complex I) that is believed to belong to the minimal assembly required for catalysis. Complex I functions in the transfer of electrons from NADH to the respiratory chain. The immediate electron acceptor for the enzyme is believed to be ubiquinone. The protein is NADH-ubiquinone oxidoreductase chain 2 (mt:ND2) of Drosophila melanogaster (Fruit fly).